We begin with the raw amino-acid sequence, 195 residues long: Peptidyl-tRNA hydrolase (195 aa).

A tRNA-binding site is contributed by Tyr17. Catalysis depends on His22, which acts as the Proton acceptor. 3 residues coordinate tRNA: Phe68, Asn70, and Asn116.

The protein belongs to the PTH family. In terms of assembly, monomer.

It is found in the cytoplasm. It carries out the reaction an N-acyl-L-alpha-aminoacyl-tRNA + H2O = an N-acyl-L-amino acid + a tRNA + H(+). Hydrolyzes ribosome-free peptidyl-tRNAs (with 1 or more amino acids incorporated), which drop off the ribosome during protein synthesis, or as a result of ribosome stalling. Functionally, catalyzes the release of premature peptidyl moieties from peptidyl-tRNA molecules trapped in stalled 50S ribosomal subunits, and thus maintains levels of free tRNAs and 50S ribosomes. The polypeptide is Peptidyl-tRNA hydrolase (Shewanella amazonensis (strain ATCC BAA-1098 / SB2B)).